Consider the following 132-residue polypeptide: uncharacterized protein (132 aa).

2 WD repeats span residues 14–53 (DLQD…LEIL) and 58–97 (AHDD…LANV).

This is an uncharacterized protein from Acanthamoeba polyphaga (Amoeba).